The following is a 152-amino-acid chain: 3-hydroxyacyl-[acyl-carrier-protein] dehydratase FabZ (152 aa).

H57 is an active-site residue.

The protein belongs to the thioester dehydratase family. FabZ subfamily.

It localises to the cytoplasm. The catalysed reaction is a (3R)-hydroxyacyl-[ACP] = a (2E)-enoyl-[ACP] + H2O. Involved in unsaturated fatty acids biosynthesis. Catalyzes the dehydration of short chain beta-hydroxyacyl-ACPs and long chain saturated and unsaturated beta-hydroxyacyl-ACPs. This is 3-hydroxyacyl-[acyl-carrier-protein] dehydratase FabZ from Bradyrhizobium sp. (strain ORS 278).